Reading from the N-terminus, the 256-residue chain is Dihydromonacolin L-[lovastatin nonaketide synthase] thioesterase (256 aa).

Active-site charge relay system residues include S122, D201, and H229.

This sequence belongs to the LovG family.

The enzyme catalyses dihydromonacolin L-[lovastatin nonaketide synthase] + H2O = holo-[lovastatin nonaketide synthase] + dihydromonacolin L carboxylate + H(+). Its pathway is polyketide biosynthesis; lovastatin biosynthesis. Functionally, esterase; part of the gene cluster that mediates the biosynthesis of lovastatin (also known as mevinolin, mevacor or monacolin K), a hypolipidemic inhibitor of (3S)-hydroxymethylglutaryl-coenzyme A (HMG-CoA) reductase (HMGR). The first step in the biosynthesis of lovastatin is the production of dihydromonacolin L acid by the lovastatin nonaketide synthase lovB and the trans-acting enoyl reductase lovC via condensation of one acetyl-CoA unit and 8 malonyl-CoA units. Dihydromonacolin L acid is released from lovB by the thioesterase lovG. Next, dihydromonacolin L acid is oxidized by the dihydromonacolin L monooxygenase lovA twice to form monacolin J acid. The 2-methylbutyrate moiety of lovastatin is synthesized by the lovastatin diketide synthase lovF via condensation of one acetyl-CoA unit and one malonyl-CoA unit. Finally, the covalent attachment of this moiety to monacolin J acid is catalyzed by the transesterase lovD to yield lovastatin. LovD has broad substrate specificity and can also convert monacolin J to simvastatin using alpha-dimethylbutanoyl-S-methyl-3-mercaptopropionate (DMB-S-MMP) as the thioester acyl donor, and can also catalyze the reverse reaction and function as hydrolase in vitro. LovD has much higher activity with LovF-bound 2-methylbutanoate than with free diketide substrates. In terms of biological role, esterase that catalyzes the release of covalently bound dihydromonacolin L from LovB during lovastatin biosynthesis. The sequence is that of Dihydromonacolin L-[lovastatin nonaketide synthase] thioesterase from Aspergillus terreus (strain NIH 2624 / FGSC A1156).